We begin with the raw amino-acid sequence, 167 residues long: UPF0102 protein RB9115 (167 aa).

It belongs to the UPF0102 family.

The sequence is that of UPF0102 protein RB9115 from Rhodopirellula baltica (strain DSM 10527 / NCIMB 13988 / SH1).